A 435-amino-acid polypeptide reads, in one-letter code: Xylose isomerase (435 aa).

Active-site residues include His100 and Asp103. The Mg(2+) site is built by Glu231, Glu267, His270, Asp295, Asp306, Asp308, and Asp338.

It belongs to the xylose isomerase family. In terms of assembly, homotetramer. It depends on Mg(2+) as a cofactor.

Its subcellular location is the cytoplasm. It carries out the reaction alpha-D-xylose = alpha-D-xylulofuranose. This is Xylose isomerase from Brucella suis (strain ATCC 23445 / NCTC 10510).